The sequence spans 316 residues: NAC domain-containing protein 22 (316 aa).

The NAC domain maps to 17–170; sequence DLPGFRFHPT…DMVLCKIYRK (154 aa). Residues 117–176 mediate DNA binding; it reads IGLKKTLVFYQGRAPRGTKTDWVMNEYRLPDYGAARAAAPPPKEDMVLCKIYRKATPLKE. Residues 229–260 are disordered; the sequence is QSSSSSAAPSGSSSKNGGAGAPREAKKEEADV. Over residues 230–244 the composition is skewed to low complexity; the sequence is SSSSSAAPSGSSSKN.

It is found in the nucleus. Functionally, transcription activator that binds sequence-specific DNA motifs. Involved in stress response. Plays a positive role in drought and salt stress tolerance through the modulation of abscisic acid-mediated signaling. In Oryza sativa subsp. japonica (Rice), this protein is NAC domain-containing protein 22.